Reading from the N-terminus, the 130-residue chain is Small ribosomal subunit protein uS9 (130 aa).

The protein belongs to the universal ribosomal protein uS9 family.

This Pseudomonas entomophila (strain L48) protein is Small ribosomal subunit protein uS9.